We begin with the raw amino-acid sequence, 751 residues long: WD repeat-containing protein 91 (751 aa).

Residues 188 to 212 (IQEENESLRHKLFALQAESSRMKKE) are a coiled coil. Residues 264 to 395 (LSQSKKGPAR…ASSTESVGVR (132 aa)) are disordered. A compositionally biased stretch (polar residues) spans 278–287 (SGASPTQTGS). Basic and acidic residues predominate over residues 334–346 (RLQEHGKERRELL). A compositionally biased stretch (polar residues) spans 377–391 (QAETSTKMPASSTES). WD repeat units follow at residues 410–449 (EHHS…QTKA), 452–492 (ISKS…NLCE), 497–559 (EDMP…QQLQ), 564–603 (PEPI…CAMS), 606–645 (AHDG…LKIS), 668–706 (VQFP…KVLE), and 713–751 (GHRA…AQKS).

This sequence belongs to the WD repeat WDR91 family.

It localises to the early endosome membrane. It is found in the late endosome membrane. Functionally, functions as a negative regulator of the PI3 kinase/PI3K activity associated with endosomal membranes. By modifying the phosphatidylinositol 3-phosphate/PtdInsP3 content of endosomal membranes may regulate endosome fusion, recycling, sorting and early to late endosome transport. In Gallus gallus (Chicken), this protein is WD repeat-containing protein 91.